We begin with the raw amino-acid sequence, 625 residues long: Ankyrin repeat domain-containing protein oryK (625 aa).

9 ANK repeats span residues 1 to 27 (MDIY…DVDG), 31 to 60 (DGKT…GRGP), 62 to 89 (NPSL…NAER), 90 to 119 (EHRS…EYQD), 162 to 195 (FFDY…DVNC), 202 to 232 (QFET…DLTI), 500 to 530 (DTRC…NVNF), 534 to 562 (SDRT…DIDL), and 568 to 598 (EGRT…DFSI).

It participates in secondary metabolite biosynthesis. Ankyrin repeat domain-containing protein; part of the gene cluster that mediates the biosynthesis of oryzines, natural products with an unusual maleidride backbone. The two subunits of the fungal fatty acid synthase oryfasA and oryfasB probably form octenoic acid. This fatty acid is most likely activated by the acyl-CoA ligase oryP to give octenyl-CoA before the citrate synthase-like protein oryE catalyzes condensation with oxaloacetate to form tricarboxylic acid. The next steps of the pathways are conjectural, but a favorite possible route has been proposed, beginning with decarboxylation and concomitant dehydration by the decarboxylase oryM, followed by tautomerization, which may lead to the production of a diene intermediate. Reduction of this diene intermediate could give the known metabolite piliformic acid. On the pathway to oryzine B and oryzine A, however, hydroxylation of the diene by the alpha-ketoglutarate-dependent dioxygenase oryG and lactonisation by the lactonohydrolases oryH or oryL could give oryzine B directly. Finally, enoyl reduction by the dehydrogenase oryD would then convert oryzine B into oryzine A. The sequence is that of Ankyrin repeat domain-containing protein oryK from Aspergillus oryzae (strain ATCC 42149 / RIB 40) (Yellow koji mold).